Reading from the N-terminus, the 355-residue chain is Heme A synthase (355 aa).

8 helical membrane passes run 21 to 41, 85 to 102, 136 to 156, 173 to 193, 208 to 228, 264 to 284, 299 to 319, and 322 to 342; these read LARW…VGGI, INLG…FWEW, LFAL…MVAS, LLTA…LGAL, AIGV…VAGL, FLIH…LLLL, ALVI…VSGV, and WVAV…AAAL. His-270 is a heme binding site. His-327 is a heme binding site.

It belongs to the COX15/CtaA family. Type 2 subfamily. In terms of assembly, interacts with CtaB. Heme b serves as cofactor.

The protein resides in the cell membrane. It carries out the reaction Fe(II)-heme o + 2 A + H2O = Fe(II)-heme a + 2 AH2. It functions in the pathway porphyrin-containing compound metabolism; heme A biosynthesis; heme A from heme O: step 1/1. Catalyzes the conversion of heme O to heme A by two successive hydroxylations of the methyl group at C8. The first hydroxylation forms heme I, the second hydroxylation results in an unstable dihydroxymethyl group, which spontaneously dehydrates, resulting in the formyl group of heme A. This is Heme A synthase from Sphingopyxis alaskensis (strain DSM 13593 / LMG 18877 / RB2256) (Sphingomonas alaskensis).